The chain runs to 540 residues: Berberine bridge enzyme-like 16 (540 aa).

An N-terminal signal peptide occupies residues 1-24 (MKFWSRPLTFLIIIIYLIIQQVNS). A disulfide bridge links Cys38 with Cys101. Asn59 is a glycosylation site (N-linked (GlcNAc...) asparagine). One can recognise an FAD-binding PCMH-type domain in the interval 79 to 254 (STRKPEVIVA…LAWKIKLVRV (176 aa)). The segment at residues 116–178 (HDYEGFSYTS…KVHAFPAGVC (63 aa)) is a cross-link (6-(S-cysteinyl)-8alpha-(pros-histidyl)-FAD (His-Cys)). Asn325 and Asn496 each carry an N-linked (GlcNAc...) asparagine glycan.

Belongs to the oxygen-dependent FAD-linked oxidoreductase family. FAD serves as cofactor. The FAD cofactor is bound via a bicovalent 6-S-cysteinyl, 8alpha-N1-histidyl FAD linkage.

It is found in the secreted. It localises to the cell wall. This is Berberine bridge enzyme-like 16 from Arabidopsis thaliana (Mouse-ear cress).